Consider the following 379-residue polypeptide: Zinc metalloproteinase nas-20 (379 aa).

The signal sequence occupies residues 1 to 20 (MKITVNFLLVALIGVPSVLS). A propeptide spanning residues 21-29 (DRHITRDKR) is cleaved from the precursor. One can recognise a Peptidase M12A domain in the interval 30-208 (QAMRDYAKWE…VLLNKFYGCN (179 aa)). An N-linked (GlcNAc...) asparagine glycan is attached at Asn67. 4 disulfide bridges follow: Cys70–Cys207, Cys91–Cys111, Cys209–Cys229, and Cys234–Cys243. His119 contacts Zn(2+). Glu120 is an active-site residue. The Zn(2+) site is built by His123 and His129. An N-linked (GlcNAc...) asparagine glycan is attached at Asn185. Residues 203–244 (KFYGCNCDNHPRKLDCKNGGYQNPANCEECLCTDGFNGQLCD) form the EGF-like domain. Asn337 and Asn370 each carry an N-linked (GlcNAc...) asparagine glycan.

Zn(2+) is required as a cofactor.

It localises to the secreted. Its function is as follows. Metalloprotease. The sequence is that of Zinc metalloproteinase nas-20 (nas-20) from Caenorhabditis elegans.